The primary structure comprises 392 residues: Phosphoglycerate kinase (392 aa).

Substrate contacts are provided by residues 21-23, Arg36, 59-62, Arg118, and Arg151; these read DFN and HLGR. ATP is bound by residues Lys202, Glu321, and 347–350; that span reads GGDS.

It belongs to the phosphoglycerate kinase family. As to quaternary structure, monomer.

It is found in the cytoplasm. The enzyme catalyses (2R)-3-phosphoglycerate + ATP = (2R)-3-phospho-glyceroyl phosphate + ADP. Its pathway is carbohydrate degradation; glycolysis; pyruvate from D-glyceraldehyde 3-phosphate: step 2/5. The protein is Phosphoglycerate kinase of Symbiobacterium thermophilum (strain DSM 24528 / JCM 14929 / IAM 14863 / T).